The sequence spans 213 residues: Ribosomal RNA small subunit methyltransferase G (213 aa).

S-adenosyl-L-methionine contacts are provided by residues Gly75, Phe80, 128–129, and Arg144; that span reads IE.

This sequence belongs to the methyltransferase superfamily. RNA methyltransferase RsmG family.

The protein localises to the cytoplasm. It carries out the reaction guanosine(527) in 16S rRNA + S-adenosyl-L-methionine = N(7)-methylguanosine(527) in 16S rRNA + S-adenosyl-L-homocysteine. Its function is as follows. Specifically methylates the N7 position of guanine in position 527 of 16S rRNA. This Brucella suis biovar 1 (strain 1330) protein is Ribosomal RNA small subunit methyltransferase G.